A 146-amino-acid polypeptide reads, in one-letter code: Large ribosomal subunit protein uL15 (146 aa).

A disordered region spans residues 1–45; sequence MTIKLHHLRPAPGSKTERTRVGRGEGSKGKTAGRGTKGTKARKNV. Residues 15-28 are compositionally biased toward basic and acidic residues; the sequence is KTERTRVGRGEGSK.

This sequence belongs to the universal ribosomal protein uL15 family. As to quaternary structure, part of the 50S ribosomal subunit.

Binds to the 23S rRNA. In Mycobacteroides abscessus (strain ATCC 19977 / DSM 44196 / CCUG 20993 / CIP 104536 / JCM 13569 / NCTC 13031 / TMC 1543 / L948) (Mycobacterium abscessus), this protein is Large ribosomal subunit protein uL15.